A 256-amino-acid polypeptide reads, in one-letter code: Triosephosphate isomerase (256 aa).

Position 9-11 (9-11 (NWK)) interacts with substrate. The Electrophile role is filled by H96. E168 functions as the Proton acceptor in the catalytic mechanism. Substrate is bound by residues S213 and 234–235 (GG).

This sequence belongs to the triosephosphate isomerase family. In terms of assembly, homodimer.

It localises to the cytoplasm. The enzyme catalyses D-glyceraldehyde 3-phosphate = dihydroxyacetone phosphate. It functions in the pathway carbohydrate biosynthesis; gluconeogenesis. The protein operates within carbohydrate degradation; glycolysis; D-glyceraldehyde 3-phosphate from glycerone phosphate: step 1/1. Involved in the gluconeogenesis. Catalyzes stereospecifically the conversion of dihydroxyacetone phosphate (DHAP) to D-glyceraldehyde-3-phosphate (G3P). In Baumannia cicadellinicola subsp. Homalodisca coagulata, this protein is Triosephosphate isomerase.